The chain runs to 308 residues: Protein translocase subunit SecF (308 aa).

6 consecutive transmembrane segments (helical) span residues 22–42 (AVSYSFSIILSLISFIWIGIY), 140–160 (IEAGAMAMLSSFLAIMVYIWV), 164–184 (WYFGLGILIALVHDVILALGF), 194–214 (LSTIAAVLTIIGYSVNDSVVI), 246–266 (ILTVITTLLANLALMLFGGEA), and 272–292 (VLVFFGIIAGTYSSIFISAPI).

It belongs to the SecD/SecF family. SecF subfamily. Forms a complex with SecD. Part of the essential Sec protein translocation apparatus which comprises SecA, SecYEG and auxiliary proteins SecDF-YajC and YidC.

The protein resides in the cell inner membrane. In terms of biological role, part of the Sec protein translocase complex. Interacts with the SecYEG preprotein conducting channel. SecDF uses the proton motive force (PMF) to complete protein translocation after the ATP-dependent function of SecA. This Rickettsia akari (strain Hartford) protein is Protein translocase subunit SecF.